A 461-amino-acid polypeptide reads, in one-letter code: CBL-interacting protein kinase 1 (461 aa).

In terms of domain architecture, Protein kinase spans 19–274; the sequence is YEIGRTLGEG…IAGIKEHEWF (256 aa). ATP is bound by residues 25–33 and Lys48; that span reads LGEGNFGKV. The Proton acceptor role is filled by Asp142. An activation loop region spans residues 160-189; it reads DFGLSALPQHLGNDGLLHTTCGSPNYIAPE. The 25-residue stretch at 308–332 folds into the NAF domain; it reads EKPTHINAFQLIGMASALDLSGFFE. The tract at residues 338 to 367 is PPI; that stretch reads QRKIRFTSTHSPKDLFDKIENVVTEMGFQV.

Belongs to the protein kinase superfamily. CAMK Ser/Thr protein kinase family. SNF1 subfamily. Mn(2+) is required as a cofactor.

It carries out the reaction L-seryl-[protein] + ATP = O-phospho-L-seryl-[protein] + ADP + H(+). The enzyme catalyses L-threonyl-[protein] + ATP = O-phospho-L-threonyl-[protein] + ADP + H(+). Its function is as follows. CIPK serine-threonine protein kinases interact with CBL proteins. Binding of a CBL protein to the regulatory NAF domain of CIPK protein lead to the activation of the kinase in a calcium-dependent manner. This Oryza sativa subsp. japonica (Rice) protein is CBL-interacting protein kinase 1 (CIPK1).